We begin with the raw amino-acid sequence, 29 residues long: Cytochrome b6-f complex subunit 8 (29 aa).

A helical transmembrane segment spans residues 3–23 (ILSISWAFLMVVFTFSLSLVV).

It belongs to the PetN family. As to quaternary structure, the 4 large subunits of the cytochrome b6-f complex are cytochrome b6, subunit IV (17 kDa polypeptide, PetD), cytochrome f and the Rieske protein, while the 4 small subunits are PetG, PetL, PetM and PetN. The complex functions as a dimer.

Its subcellular location is the plastid. It is found in the chloroplast thylakoid membrane. Functionally, component of the cytochrome b6-f complex, which mediates electron transfer between photosystem II (PSII) and photosystem I (PSI), cyclic electron flow around PSI, and state transitions. In Chara vulgaris (Common stonewort), this protein is Cytochrome b6-f complex subunit 8.